Consider the following 512-residue polypeptide: Protein OS-9 homolog (512 aa).

Residues 1-17 (MRRFNLILLASLQLVGA) form the signal peptide. Positions 71–91 (QAREADARDNEAENKDQDGPS) are disordered. A compositionally biased stretch (basic and acidic residues) spans 73 to 88 (READARDNEAENKDQD). A glycan (N-linked (GlcNAc...) asparagine) is linked at Asn-118. Residues 149–288 (DSCLYFMSGW…VVNTPRLCND (140 aa)) form the MRH domain. An intrachain disulfide couples Cys-151 to Cys-164. The a mannooligosaccharide derivative site is built by Trp-158, Trp-159, Gln-171, Asp-242, Arg-248, Glu-270, and Tyr-276. 2 disulfides stabilise this stretch: Cys-241-Cys-274 and Cys-256-Cys-286. 2 disordered regions span residues 329 to 349 (QVPL…PRDV) and 485 to 512 (AAAK…KDEL). The segment covering 492–504 (DDEEEVVEGSEEQ) has biased composition (acidic residues). A Prevents secretion from ER motif is present at residues 509 to 512 (KDEL).

This sequence belongs to the OS-9 family. As to quaternary structure, interacts with missfolded ER lumenal proteins.

The protein localises to the endoplasmic reticulum membrane. Lectin involved in the quality control of the secretory pathway. As a member of the endoplasmic reticulum-associated degradation lumenal (ERAD-L) surveillance system, targets misfolded endoplasmic reticulum lumenal glycoproteins for degradation. The protein is Protein OS-9 homolog (YOS1) of Gibberella zeae (strain ATCC MYA-4620 / CBS 123657 / FGSC 9075 / NRRL 31084 / PH-1) (Wheat head blight fungus).